The chain runs to 399 residues: S-adenosylmethionine synthase (399 aa).

Position 15 (His15) interacts with ATP. Asp17 contacts Mg(2+). Position 43 (Glu43) interacts with K(+). Positions 56 and 99 each coordinate L-methionine. Positions 99 to 109 (QSADIAQGVDN) are flexible loop. ATP contacts are provided by residues 174–176 (DGK), 244–245 (RF), Asp253, 259–260 (RK), Ala276, and Lys280. Asp253 is an L-methionine binding site. Position 284 (Lys284) interacts with L-methionine.

Belongs to the AdoMet synthase family. In terms of assembly, homotetramer; dimer of dimers. It depends on Mg(2+) as a cofactor. Requires K(+) as cofactor.

Its subcellular location is the cytoplasm. It catalyses the reaction L-methionine + ATP + H2O = S-adenosyl-L-methionine + phosphate + diphosphate. The protein operates within amino-acid biosynthesis; S-adenosyl-L-methionine biosynthesis; S-adenosyl-L-methionine from L-methionine: step 1/1. In terms of biological role, catalyzes the formation of S-adenosylmethionine (AdoMet) from methionine and ATP. The overall synthetic reaction is composed of two sequential steps, AdoMet formation and the subsequent tripolyphosphate hydrolysis which occurs prior to release of AdoMet from the enzyme. This is S-adenosylmethionine synthase from Salinispora arenicola (strain CNS-205).